Consider the following 430-residue polypeptide: 3-phosphoshikimate 1-carboxyvinyltransferase (430 aa).

The 3-phosphoshikimate site is built by Lys-20, Ser-21, and Arg-25. Residue Lys-20 participates in phosphoenolpyruvate binding. Phosphoenolpyruvate contacts are provided by Gly-92 and Arg-120. 3-phosphoshikimate-binding residues include Ser-166, Gln-168, Asp-312, and Lys-339. A phosphoenolpyruvate-binding site is contributed by Gln-168. The active-site Proton acceptor is Asp-312. Residues Arg-343 and Arg-387 each contribute to the phosphoenolpyruvate site.

The protein belongs to the EPSP synthase family. As to quaternary structure, monomer.

It is found in the cytoplasm. It catalyses the reaction 3-phosphoshikimate + phosphoenolpyruvate = 5-O-(1-carboxyvinyl)-3-phosphoshikimate + phosphate. The protein operates within metabolic intermediate biosynthesis; chorismate biosynthesis; chorismate from D-erythrose 4-phosphate and phosphoenolpyruvate: step 6/7. In terms of biological role, catalyzes the transfer of the enolpyruvyl moiety of phosphoenolpyruvate (PEP) to the 5-hydroxyl of shikimate-3-phosphate (S3P) to produce enolpyruvyl shikimate-3-phosphate and inorganic phosphate. The protein is 3-phosphoshikimate 1-carboxyvinyltransferase of Lactococcus lactis subsp. cremoris (strain SK11).